A 306-amino-acid polypeptide reads, in one-letter code: Protein FdhE homolog (306 aa).

Belongs to the FdhE family.

The protein localises to the cytoplasm. Functionally, necessary for formate dehydrogenase activity. The sequence is that of Protein FdhE homolog from Proteus mirabilis (strain HI4320).